The following is a 76-amino-acid chain: Omega-conotoxin-like TxO5 (76 aa).

The N-terminal stretch at Met1–Ala22 is a signal peptide. The propeptide occupies Ile23–Asn48. Disulfide bonds link Cys51-Cys66, Cys58-Cys70, and Cys65-Cys75.

Belongs to the conotoxin O1 superfamily. As to expression, expressed by the venom duct.

The protein resides in the secreted. Its function is as follows. Omega-conotoxins act at presynaptic membranes, they bind and block voltage-gated calcium channels (Cav). This chain is Omega-conotoxin-like TxO5, found in Conus textile (Cloth-of-gold cone).